The primary structure comprises 177 residues: Large ribosomal subunit protein uL6 (177 aa).

It belongs to the universal ribosomal protein uL6 family. In terms of assembly, part of the 50S ribosomal subunit.

Its function is as follows. This protein binds to the 23S rRNA, and is important in its secondary structure. It is located near the subunit interface in the base of the L7/L12 stalk, and near the tRNA binding site of the peptidyltransferase center. This Brucella abortus (strain S19) protein is Large ribosomal subunit protein uL6.